A 549-amino-acid chain; its full sequence is Glucose-6-phosphate isomerase (549 aa).

E355 functions as the Proton donor in the catalytic mechanism. Catalysis depends on residues H386 and K514.

This sequence belongs to the GPI family.

It is found in the cytoplasm. It carries out the reaction alpha-D-glucose 6-phosphate = beta-D-fructose 6-phosphate. It participates in carbohydrate biosynthesis; gluconeogenesis. The protein operates within carbohydrate degradation; glycolysis; D-glyceraldehyde 3-phosphate and glycerone phosphate from D-glucose: step 2/4. Its function is as follows. Catalyzes the reversible isomerization of glucose-6-phosphate to fructose-6-phosphate. The chain is Glucose-6-phosphate isomerase from Salmonella typhi.